The sequence spans 226 residues: ATP synthase F(0) complex subunit a (226 aa).

A run of 6 helical transmembrane segments spans residues 6–26 (FASF…IVLF), 68–88 (WTLM…LGLL), 97–117 (QLSM…ITGF), 138–158 (IPML…ALAV), 164–184 (ITAG…LMSI), and 200–222 (TILE…SLYL).

It belongs to the ATPase A chain family. As to quaternary structure, component of the ATP synthase complex composed at least of ATP5F1A/subunit alpha, ATP5F1B/subunit beta, ATP5MC1/subunit c (homooctomer), MT-ATP6/subunit a, MT-ATP8/subunit 8, ATP5ME/subunit e, ATP5MF/subunit f, ATP5MG/subunit g, ATP5MK/subunit k, ATP5MJ/subunit j, ATP5F1C/subunit gamma, ATP5F1D/subunit delta, ATP5F1E/subunit epsilon, ATP5PF/subunit F6, ATP5PB/subunit b, ATP5PD/subunit d, ATP5PO/subunit OSCP. ATP synthase complex consists of a soluble F(1) head domain (subunits alpha(3) and beta(3)) - the catalytic core - and a membrane F(0) domain - the membrane proton channel (subunits c, a, 8, e, f, g, k and j). These two domains are linked by a central stalk (subunits gamma, delta, and epsilon) rotating inside the F1 region and a stationary peripheral stalk (subunits F6, b, d, and OSCP). Interacts with DNAJC30; interaction is direct.

It localises to the mitochondrion inner membrane. The catalysed reaction is H(+)(in) = H(+)(out). Subunit a, of the mitochondrial membrane ATP synthase complex (F(1)F(0) ATP synthase or Complex V) that produces ATP from ADP in the presence of a proton gradient across the membrane which is generated by electron transport complexes of the respiratory chain. ATP synthase complex consist of a soluble F(1) head domain - the catalytic core - and a membrane F(1) domain - the membrane proton channel. These two domains are linked by a central stalk rotating inside the F(1) region and a stationary peripheral stalk. During catalysis, ATP synthesis in the catalytic domain of F(1) is coupled via a rotary mechanism of the central stalk subunits to proton translocation. With the subunit c (ATP5MC1), forms the proton-conducting channel in the F(0) domain, that contains two crucial half-channels (inlet and outlet) that facilitate proton movement from the mitochondrial intermembrane space (IMS) into the matrix. Protons are taken up via the inlet half-channel and released through the outlet half-channel, following a Grotthuss mechanism. The sequence is that of ATP synthase F(0) complex subunit a from Bos mutus grunniens (Wild yak).